Here is a 61-residue protein sequence, read N- to C-terminus: [Val1,Thr6]-bradykinyl-Val,Asp (61 aa).

Residues 1 to 22 (MAFLKKSLFLVLFLGVVSLSFC) form the signal peptide. A propeptide spanning residues 23-48 (EEEEREEHEEEKREAEAAESAENLIS) is cleaved from the precursor. A disordered region spans residues 27 to 61 (REEHEEEKREAEAAESAENLISKRVPPGFTPFRVD).

As to expression, expressed by the skin glands. Expression levels in inguinal glands and granular glands are virtually the same.

The protein resides in the secreted. Its function is as follows. Induces contraction of rat ileum smooth muscle (EC(50)=2.73 uM) but has no activity towards rat smooth muscle from tail artery, urinary bladder or uterus. Binds to both bradykinin receptor B1 (BDKRB1) and B2 (BDKRB2); the effect via BDKRB1 is stronger. The polypeptide is [Val1,Thr6]-bradykinyl-Val,Asp (Physalaemus nattereri (Cuyaba dwarf frog)).